We begin with the raw amino-acid sequence, 253 residues long: Sulfate transporter CysZ (253 aa).

Helical transmembrane passes span 27–47, 71–91, 150–170, and 211–231; these read FVLL…YLAV, ILWP…FTVV, LFIL…WLLF, and IVYV…AAVA.

It belongs to the CysZ family.

Its subcellular location is the cell inner membrane. High affinity, high specificity proton-dependent sulfate transporter, which mediates sulfate uptake. Provides the sulfur source for the cysteine synthesis pathway. This chain is Sulfate transporter CysZ, found in Pseudomonas syringae pv. tomato (strain ATCC BAA-871 / DC3000).